The primary structure comprises 88 residues: Apolipoprotein C-I (88 aa).

Residues 1 to 26 (MRLFLSLPVLVVVLAMVLEGPAPTQA) form the signal peptide.

Belongs to the apolipoprotein C1 family.

Its subcellular location is the secreted. Functionally, inhibitor of lipoprotein binding to the low density lipoprotein (LDL) receptor, LDL receptor-related protein, and very low density lipoprotein (VLDL) receptor. Associates with high density lipoproteins (HDL) and the triacylglycerol-rich lipoproteins in the plasma and makes up about 10% of the protein of the VLDL and 2% of that of HDL. Appears to interfere directly with fatty acid uptake and is also the major plasma inhibitor of cholesteryl ester transfer protein (CETP). Binds free fatty acids and reduces their intracellular esterification. Modulates the interaction of APOE with beta-migrating VLDL and inhibits binding of beta-VLDL to the LDL receptor-related protein. The sequence is that of Apolipoprotein C-I (APOC1) from Phoca vitulina (Harbor seal).